The sequence spans 440 residues: Proline--tRNA ligase (440 aa).

The protein belongs to the class-II aminoacyl-tRNA synthetase family. ProS type 2 subfamily. In terms of assembly, homodimer.

Its subcellular location is the cytoplasm. It carries out the reaction tRNA(Pro) + L-proline + ATP = L-prolyl-tRNA(Pro) + AMP + diphosphate. Its function is as follows. Catalyzes the attachment of proline to tRNA(Pro) in a two-step reaction: proline is first activated by ATP to form Pro-AMP and then transferred to the acceptor end of tRNA(Pro). The sequence is that of Proline--tRNA ligase from Rhizobium johnstonii (strain DSM 114642 / LMG 32736 / 3841) (Rhizobium leguminosarum bv. viciae).